We begin with the raw amino-acid sequence, 280 residues long: Energy-coupling factor transporter ATP-binding protein EcfA1 (280 aa).

An ABC transporter domain is found at 6-241 (IELKNVTFRY…GDELLDLGLD (236 aa)). ATP is bound at residue 41–48 (GHNGSGKS).

Belongs to the ABC transporter superfamily. Energy-coupling factor EcfA family. Forms a stable energy-coupling factor (ECF) transporter complex composed of 2 membrane-embedded substrate-binding proteins (S component), 2 ATP-binding proteins (A component) and 2 transmembrane proteins (T component).

It is found in the cell membrane. Functionally, ATP-binding (A) component of a common energy-coupling factor (ECF) ABC-transporter complex. Unlike classic ABC transporters this ECF transporter provides the energy necessary to transport a number of different substrates. In Streptococcus mutans serotype c (strain ATCC 700610 / UA159), this protein is Energy-coupling factor transporter ATP-binding protein EcfA1.